The chain runs to 176 residues: Negative modulator of initiation of replication (176 aa).

It belongs to the SeqA family. As to quaternary structure, homodimer. Polymerizes to form helical filaments.

Its subcellular location is the cytoplasm. In terms of biological role, negative regulator of replication initiation, which contributes to regulation of DNA replication and ensures that replication initiation occurs exactly once per chromosome per cell cycle. Binds to pairs of hemimethylated GATC sequences in the oriC region, thus preventing assembly of replication proteins and re-initiation at newly replicated origins. Repression is relieved when the region becomes fully methylated. The protein is Negative modulator of initiation of replication of Hamiltonella defensa subsp. Acyrthosiphon pisum (strain 5AT).